Reading from the N-terminus, the 194-residue chain is Fe/S biogenesis protein NfuA (194 aa).

2 residues coordinate [4Fe-4S] cluster: cysteine 152 and cysteine 155.

The protein belongs to the NfuA family. In terms of assembly, homodimer. [4Fe-4S] cluster serves as cofactor.

Its function is as follows. Involved in iron-sulfur cluster biogenesis. Binds a 4Fe-4S cluster, can transfer this cluster to apoproteins, and thereby intervenes in the maturation of Fe/S proteins. Could also act as a scaffold/chaperone for damaged Fe/S proteins. The chain is Fe/S biogenesis protein NfuA from Stutzerimonas stutzeri (strain A1501) (Pseudomonas stutzeri).